Reading from the N-terminus, the 344-residue chain is L-rhamnose-proton symporter (344 aa).

Transmembrane regions (helical) follow at residues 4–24 (AITMGIFWHLIGAASAACFYA), 38–58 (WSVGGIVSWIILPWAISALLL), 68–88 (FSLSTLLPVFLFGAMWGIGNI), 101–121 (MGIGIAIGITLIVGTLMTPII), 137–157 (TLLGVLVALIGVGIVTRAGQL), 175–195 (LVLAVMCGIFSAGMSFAMNAA), 214–234 (LPSYVVIMGGGAIINLGFCFI), 259–279 (VLLSALGGLMWYLQFFFYAWG), 290–310 (ISWMLHMSFYVLCGGIVGLVL), and 323–343 (VLSLGCVVIIVAANIVGIGMA).

It belongs to the L-rhamnose transporter (TC 2.A.7.6) family.

Its subcellular location is the cell inner membrane. The enzyme catalyses L-rhamnopyranose(in) + H(+)(in) = L-rhamnopyranose(out) + H(+)(out). Its function is as follows. Uptake of L-rhamnose across the cytoplasmic membrane with the concomitant transport of protons into the cell (symport system). This is L-rhamnose-proton symporter from Escherichia coli O127:H6 (strain E2348/69 / EPEC).